We begin with the raw amino-acid sequence, 783 residues long: Mitochondrial intermediate peptidase (783 aa).

The transit peptide at 1–33 directs the protein to the mitochondrion; sequence MKAGIPLSRCTQRIPLLVARQVSRNITTTTTKF. His565 contributes to the Zn(2+) binding site. The active site involves Glu566. Zn(2+) is bound by residues His569 and His572.

Belongs to the peptidase M3 family. The cofactor is Zn(2+).

It localises to the mitochondrion matrix. The catalysed reaction is Release of an N-terminal octapeptide as second stage of processing of some proteins imported into the mitochondrion.. In terms of biological role, cleaves proteins, imported into the mitochondrion, to their mature size. While most mitochondrial precursor proteins are processed to the mature form in one step by mitochondrial processing peptidase (MPP), the sequential cleavage by MIP of an octapeptide after initial processing by MPP is a required step for a subgroup of nuclear-encoded precursor proteins destined for the matrix or the inner membrane. This Candida albicans (strain SC5314 / ATCC MYA-2876) (Yeast) protein is Mitochondrial intermediate peptidase (OCT1).